The chain runs to 150 residues: Cdc42 effector protein 5 (150 aa).

Disordered stretches follow at residues 1–20, 34–89, and 114–133; these read MPVM…DRGA, LHVG…PADP, and SETT…QHPK. The region spanning 23-37 is the CRIB domain; it reads ISAPLGDFRHTLHVG. Arginine 38 carries the omega-N-methylarginine modification. Pro residues-rich tracts occupy residues 55 to 66 and 74 to 87; these read GPPPEPGAPPVV and PAAP…PSPA. Positions 114–127 are enriched in basic and acidic residues; sequence SETTATKPDGDAHP.

Belongs to the BORG/CEP family. As to quaternary structure, interacts with CDC42 in a GTP-dependent manner, and with SEPT7. In terms of tissue distribution, highly expressed in the skeletal muscle.

The protein resides in the endomembrane system. The protein localises to the cytoplasm. It is found in the cytoskeleton. In terms of biological role, probably involved in the organization of the actin cytoskeleton. May act downstream of CDC42 to induce actin filament assembly leading to cell shape changes. Induces pseudopodia formation in fibroblasts. Inhibits MAPK8 independently of CDC42 binding. Controls septin organization and this effect is negatively regulated by CDC42. The polypeptide is Cdc42 effector protein 5 (Cdc42ep5) (Mus musculus (Mouse)).